The primary structure comprises 162 residues: MAFMEKIFPDILEAIRNEEIIKESKKIPMPYFGLFALVIFDKVKELGSETSLYEIGEEFGKMLSPKNIEELKKIFKLMNFGDLEIDENKILLKNPPYKIKLSNPPYQWVSKEEPIHDFIAGILAGCLEEIFKKKFVVNEVECVSQGKDKCVFEVKEVDELNK.

Belongs to the M.jannaschii MJ0150/MJ0739/MJ0745/MJ1460/MJ1642 family.

This is an uncharacterized protein from Methanocaldococcus jannaschii (strain ATCC 43067 / DSM 2661 / JAL-1 / JCM 10045 / NBRC 100440) (Methanococcus jannaschii).